A 68-amino-acid chain; its full sequence is U-poneritoxin(01)-Om4b (68 aa).

Residues 1–25 (MKPSGLTLAFLVVFMMAIMYNSVQA) form the signal peptide. A propeptide spanning residues 26 to 39 (EALADADAEAFAEA) is cleaved from the precursor.

This sequence belongs to the formicidae venom precursor-01 superfamily. As to quaternary structure, homo- or heterodimer with PLP4 (AC A0A348G5W0); disulfide-linked. Truncated sequences of this peptide have also been found in the venom. It is possible they have been cleaved in the venom. In terms of tissue distribution, expressed by the venom gland.

The protein localises to the secreted. Functionally, this homodimer composed of two cationic amphipathic alpha-helical peptides has antimicrobial activities against E.coli, S.aureus (MIC=3.1 uM), and S.cerevisiae (MIC=3.1 uM). It also shows histamine-releasing activity (66.4% at 10 uM) and a weak hemolytic activity (10.5% at 50 uM). In Odontomachus monticola (Trap-jaw ant), this protein is U-poneritoxin(01)-Om4b.